Consider the following 251-residue polypeptide: DNA repair protein RecO (251 aa).

The protein belongs to the RecO family.

Involved in DNA repair and RecF pathway recombination. The sequence is that of DNA repair protein RecO from Nitratidesulfovibrio vulgaris (strain ATCC 29579 / DSM 644 / CCUG 34227 / NCIMB 8303 / VKM B-1760 / Hildenborough) (Desulfovibrio vulgaris).